Here is a 304-residue protein sequence, read N- to C-terminus: Uricase (304 aa).

Ala-2 is modified (N-acetylalanine). N6-acetyllysine; alternate occurs at positions 10 and 23. N6-succinyllysine; alternate is present on residues Lys-10 and Lys-23. The active-site Charge relay system is Lys-23. 2 positions are modified to N6-acetyllysine: Lys-27 and Lys-36. Phosphoserine is present on residues Ser-39 and Ser-63. Thr-68 acts as the Charge relay system in catalysis. Urate contacts are provided by Thr-68 and Asp-69. Lys-118, Lys-122, and Lys-164 each carry N6-acetyllysine. Residue Phe-170 coordinates urate. N6-acetyllysine occurs at positions 175 and 185. Arg-187 contributes to the urate binding site. Residues Lys-221 and Lys-228 each carry the N6-acetyllysine; alternate modification. Lys-221 and Lys-228 each carry N6-succinyllysine; alternate. The residue at position 232 (Ser-232) is a Phosphoserine. Residues Val-235, Gln-236, and Asn-262 each contribute to the urate site. His-264 serves as the catalytic Charge relay system. An N6-acetyllysine modification is found at Lys-278. Tyr-289 carries the post-translational modification Phosphotyrosine. Positions 302–304 match the Microbody targeting signal motif; the sequence is SRL.

The protein belongs to the uricase family.

The protein localises to the peroxisome. It catalyses the reaction urate + O2 + H2O = 5-hydroxyisourate + H2O2. It participates in purine metabolism; urate degradation; (S)-allantoin from urate: step 1/3. In terms of biological role, catalyzes the oxidation of uric acid to 5-hydroxyisourate, which is further processed to form (S)-allantoin. The sequence is that of Uricase (UOX) from Macaca fascicularis (Crab-eating macaque).